A 340-amino-acid chain; its full sequence is Meiotic recombination protein DMC1/LIM15 homolog (340 aa).

Residue 126–133 (GEFRTGKT) participates in ATP binding. Arginine 230 contributes to the dsDNA binding site. Arginine 230, phenylalanine 233, arginine 236, arginine 242, and arginine 311 together coordinate ssDNA. DsDNA contacts are provided by arginine 236 and arginine 242.

This sequence belongs to the RecA family. DMC1 subfamily. In terms of assembly, double stacked ring-shaped homooctamer. Interacts with BRCA2. Interacts with the MND1-PSMC3IP heterodimer. Interacts with RAD51AP1; the interaction is direct and stimulates DMC1-mediated homologous recombination. As to expression, testis.

It is found in the nucleus. The protein localises to the chromosome. Participates in meiotic recombination, specifically in homologous strand assimilation, which is required for the resolution of meiotic double-strand breaks. This Mus musculus (Mouse) protein is Meiotic recombination protein DMC1/LIM15 homolog.